The sequence spans 100 residues: MISGTVKPNFWSRLLLSIIAIFALPNAQSFENQNNTENYSSSVSIQQALETVKVAREVQRQAIPQPSISRQTEKQLKIQPHFFTEALNISAPIRAGPLLI.

This is an uncharacterized protein from Haemophilus influenzae (strain ATCC 51907 / DSM 11121 / KW20 / Rd).